Reading from the N-terminus, the 213-residue chain is Cytochrome b6 (213 aa).

The chain crosses the membrane as a helical span at residues 30–50 (IFYCLGGLTLLAFLVQCVTGL). Cys-33 contributes to the heme c binding site. Heme b is bound by residues His-84 and His-98. A run of 3 helical transmembrane segments spans residues 88–108 (ANLM…TGSF), 114–134 (LNWL…FTGY), and 184–204 (LHVM…FIMI). 2 residues coordinate heme b: His-185 and His-200.

It belongs to the cytochrome b family. PetB subfamily. The subunits of the cytochrome bc complex are a Rieske Fe-S protein (PetC), cytochrome b6 (PetB), subunit IV (PetD), and a diheme cytochrome c (PetX). Heme b serves as cofactor. Heme c is required as a cofactor.

The protein localises to the cell membrane. Its function is as follows. Component of the cytochrome bc complex which donates electrons to the photosynthetic reaction center. The sequence is that of Cytochrome b6 from Heliobacterium mobile (Heliobacillus mobilis).